A 977-amino-acid chain; its full sequence is 2-oxoglutarate dehydrogenase E1 component (977 aa).

The region spanning 77-125 is the RPE1 insert domain; the sequence is VLNNRHLAKPAYREEFKGDTERSTAAYIDIREDASTGSTSKLPLEAKFG.

It belongs to the alpha-ketoglutarate dehydrogenase family. Homodimer. Part of the 2-oxoglutarate dehydrogenase (OGDH) complex composed of E1 (2-oxoglutarate dehydrogenase), E2 (dihydrolipoamide succinyltransferase) and E3 (dihydrolipoamide dehydrogenase); the complex contains multiple copies of the three enzymatic components (E1, E2 and E3). It depends on thiamine diphosphate as a cofactor.

It carries out the reaction N(6)-[(R)-lipoyl]-L-lysyl-[protein] + 2-oxoglutarate + H(+) = N(6)-[(R)-S(8)-succinyldihydrolipoyl]-L-lysyl-[protein] + CO2. In terms of biological role, E1 component of the 2-oxoglutarate dehydrogenase (OGDH) complex which catalyzes the decarboxylation of 2-oxoglutarate, the first step in the conversion of 2-oxoglutarate to succinyl-CoA and CO(2). The protein is 2-oxoglutarate dehydrogenase E1 component (sucA) of Rickettsia felis (strain ATCC VR-1525 / URRWXCal2) (Rickettsia azadi).